The chain runs to 221 residues: Transcription factor otaR1 (221 aa).

A disordered region spans residues 109-146; it reads ASRSRPAFSTPASRPGLSSAKSPSLGATSPGSMDRSEE. The span at 127 to 139 shows a compositional bias: polar residues; it reads SAKSPSLGATSPG. The tract at residues 152–192 is basic motif; it reads KKYHEKYKERNRLAAGRSRQKQADLINLLQAEQQEEERRRK. Positions 152-215 constitute a bZIP domain; that stretch reads KKYHEKYKER…VDMKQELQHH (64 aa). The leucine-zipper stretch occupies residues 198-212; that stretch reads IANMQKELVDMKQEL.

The protein localises to the nucleus. Transcription factor; part of the gene cluster that mediates the biosynthesis of ochratoxin A (OTA), a mycotoxin demonstrated to have nephrotoxic, immunotoxic, genotoxic, neurotoxic, and teratogenic properties. Positively regulates the expression of the OTA biosynthetic genes and subsequent production of OTA. Probably binds to conserved 5'-ACGT-3' bZIP binding motifs found in multiple copies (3 to 4) in the promoters of the OTA biosynthetic genes. Acts not only as a pathway-specific regulator of the OTA cluster but also binds at other chromosomal positions outside the OTA cluster and can act as a broad regulator. Negatively regulates pathogenicity and plays a critical role in tolerance to reactive oxygen species (ROS). This Aspergillus niger (strain ATCC MYA-4892 / CBS 513.88 / FGSC A1513) protein is Transcription factor otaR1.